Consider the following 162-residue polypeptide: Putative pre-16S rRNA nuclease (162 aa).

It belongs to the YqgF nuclease family.

The protein resides in the cytoplasm. Could be a nuclease involved in processing of the 5'-end of pre-16S rRNA. This chain is Putative pre-16S rRNA nuclease, found in Brucella melitensis biotype 1 (strain ATCC 23456 / CCUG 17765 / NCTC 10094 / 16M).